The chain runs to 95 residues: Aspartyl/glutamyl-tRNA(Asn/Gln) amidotransferase subunit C (95 aa).

This sequence belongs to the GatC family. As to quaternary structure, heterotrimer of A, B and C subunits.

It catalyses the reaction L-glutamyl-tRNA(Gln) + L-glutamine + ATP + H2O = L-glutaminyl-tRNA(Gln) + L-glutamate + ADP + phosphate + H(+). It carries out the reaction L-aspartyl-tRNA(Asn) + L-glutamine + ATP + H2O = L-asparaginyl-tRNA(Asn) + L-glutamate + ADP + phosphate + 2 H(+). Functionally, allows the formation of correctly charged Asn-tRNA(Asn) or Gln-tRNA(Gln) through the transamidation of misacylated Asp-tRNA(Asn) or Glu-tRNA(Gln) in organisms which lack either or both of asparaginyl-tRNA or glutaminyl-tRNA synthetases. The reaction takes place in the presence of glutamine and ATP through an activated phospho-Asp-tRNA(Asn) or phospho-Glu-tRNA(Gln). In Bartonella henselae (strain ATCC 49882 / DSM 28221 / CCUG 30454 / Houston 1) (Rochalimaea henselae), this protein is Aspartyl/glutamyl-tRNA(Asn/Gln) amidotransferase subunit C.